A 299-amino-acid polypeptide reads, in one-letter code: NAD kinase (299 aa).

Asp71 functions as the Proton acceptor in the catalytic mechanism. NAD(+)-binding positions include 71 to 72 (DG), 145 to 146 (ND), Arg173, Asp175, 186 to 191 (TAYALS), Ala210, and Gln248.

This sequence belongs to the NAD kinase family. A divalent metal cation serves as cofactor.

The protein resides in the cytoplasm. It catalyses the reaction NAD(+) + ATP = ADP + NADP(+) + H(+). Its function is as follows. Involved in the regulation of the intracellular balance of NAD and NADP, and is a key enzyme in the biosynthesis of NADP. Catalyzes specifically the phosphorylation on 2'-hydroxyl of the adenosine moiety of NAD to yield NADP. This Bordetella avium (strain 197N) protein is NAD kinase.